A 439-amino-acid polypeptide reads, in one-letter code: Ornithine aminotransferase, mitochondrial (439 aa).

A mitochondrion-targeting transit peptide spans 1–25 (MLSKLASLQTIAALRRGVHTSVASA). N6-acetyllysine is present on residues Lys49 and Lys66. Lys102 is modified (N6-succinyllysine). An N6-acetyllysine; alternate modification is found at Lys107. Lys107 carries the N6-succinyllysine; alternate modification. N6-(pyridoxal phosphate)lysine is present on Lys292. An N6-acetyllysine; alternate modification is found at Lys362. Residue Lys362 is modified to N6-succinyllysine; alternate. N6-acetyllysine is present on residues Lys386 and Lys392. Lys405 carries the N6-acetyllysine; alternate modification. N6-succinyllysine; alternate is present on Lys405. Residue Lys421 is modified to N6-acetyllysine.

The protein belongs to the class-III pyridoxal-phosphate-dependent aminotransferase family. As to quaternary structure, homohexamer. It depends on pyridoxal 5'-phosphate as a cofactor.

The protein localises to the mitochondrion matrix. It catalyses the reaction L-ornithine + 2-oxoglutarate = L-glutamate 5-semialdehyde + L-glutamate. It functions in the pathway amino-acid biosynthesis; L-proline biosynthesis; L-glutamate 5-semialdehyde from L-ornithine: step 1/1. Catalyzes the reversible interconversion of L-ornithine and 2-oxoglutarate to L-glutamate semialdehyde and L-glutamate. The protein is Ornithine aminotransferase, mitochondrial (Oat) of Mus musculus (Mouse).